The primary structure comprises 134 residues: MATIFTKIINRELPGRFVYEDDDVVAFLTIEPMTQGHTLVVPCAEIDQWQNVDPAIFGRVIAVSQLIGKGVCRAFNAERAGVIIAGFEVPHLHIHVFPTHSLSNFSFANVDRNPSPESLDAAQDKIKAALTQLA.

Residues 4–107 (IFTKIINREL…PTHSLSNFSF (104 aa)) enclose the HIT domain. The short motif at 91 to 95 (HLHIH) is the Histidine triad motif element.

This is an uncharacterized protein from Mycobacterium leprae (strain TN).